The chain runs to 341 residues: N-acetyl-gamma-glutamyl-phosphate reductase (341 aa).

Cysteine 147 is a catalytic residue.

The protein belongs to the NAGSA dehydrogenase family. Type 1 subfamily.

It is found in the cytoplasm. The enzyme catalyses N-acetyl-L-glutamate 5-semialdehyde + phosphate + NADP(+) = N-acetyl-L-glutamyl 5-phosphate + NADPH + H(+). It participates in amino-acid biosynthesis; L-arginine biosynthesis; N(2)-acetyl-L-ornithine from L-glutamate: step 3/4. Its function is as follows. Catalyzes the NADPH-dependent reduction of N-acetyl-5-glutamyl phosphate to yield N-acetyl-L-glutamate 5-semialdehyde. This is N-acetyl-gamma-glutamyl-phosphate reductase from Dehalococcoides mccartyi (strain CBDB1).